Here is a 767-residue protein sequence, read N- to C-terminus: 5-methyltetrahydropteroyltriglutamate--homocysteine methyltransferase (767 aa).

5-methyltetrahydropteroyltri-L-glutamate contacts are provided by residues 17-20 and Lys-117; that span reads RELK. L-homocysteine is bound by residues 442–444 and Glu-495; that span reads IGS. L-methionine is bound by residues 442 to 444 and Glu-495; that span reads IGS. 5-methyltetrahydropteroyltri-L-glutamate-binding positions include 526–527 and Trp-572; that span reads RC. L-homocysteine is bound at residue Asp-610. Asp-610 contributes to the L-methionine binding site. Glu-616 lines the 5-methyltetrahydropteroyltri-L-glutamate pocket. Positions 653, 655, and 677 each coordinate Zn(2+). The Proton donor role is filled by His-706. Cys-738 contributes to the Zn(2+) binding site.

It belongs to the vitamin-B12 independent methionine synthase family. Requires Zn(2+) as cofactor.

It catalyses the reaction 5-methyltetrahydropteroyltri-L-glutamate + L-homocysteine = tetrahydropteroyltri-L-glutamate + L-methionine. The protein operates within amino-acid biosynthesis; L-methionine biosynthesis via de novo pathway; L-methionine from L-homocysteine (MetE route): step 1/1. Functionally, catalyzes the transfer of a methyl group from 5-methyltetrahydrofolate to homocysteine resulting in methionine formation. This is 5-methyltetrahydropteroyltriglutamate--homocysteine methyltransferase from Bifidobacterium animalis subsp. lactis (strain AD011).